A 157-amino-acid chain; its full sequence is MKLSHLDEKNHPKMVDVSDKNITLRIATASGIIYMSQEAFDVIKNNTAKKGPVLQTAIVAAIMGVKKTSEIIPMCHPLMLSKVETNIVEFVKECAFKLIVTVKCEGKTGVEMEALSGVSIGLLTIYDMIKAIDKSMRITDIVLESKEGGKSGKFVRS.

Substrate is bound by residues 74–76 (MCH) and 112–113 (ME). Residue Asp-127 is part of the active site.

The protein belongs to the MoaC family. As to quaternary structure, homohexamer; trimer of dimers.

It carries out the reaction (8S)-3',8-cyclo-7,8-dihydroguanosine 5'-triphosphate = cyclic pyranopterin phosphate + diphosphate. Its pathway is cofactor biosynthesis; molybdopterin biosynthesis. Catalyzes the conversion of (8S)-3',8-cyclo-7,8-dihydroguanosine 5'-triphosphate to cyclic pyranopterin monophosphate (cPMP). This chain is Cyclic pyranopterin monophosphate synthase, found in Campylobacter jejuni subsp. jejuni serotype O:2 (strain ATCC 700819 / NCTC 11168).